A 418-amino-acid polypeptide reads, in one-letter code: Tyrosine--tRNA ligase 1 (418 aa).

Tyr-34 contacts L-tyrosine. The 'HIGH' region signature appears at Pro-39 to His-48. Residues Tyr-169 and Gln-173 each contribute to the L-tyrosine site. Positions Lys-230 to Thr-234 match the 'KMSKS' region motif. An ATP-binding site is contributed by Lys-233. In terms of domain architecture, S4 RNA-binding spans Thr-352 to Tyr-418.

It belongs to the class-I aminoacyl-tRNA synthetase family. TyrS type 1 subfamily. Homodimer.

It is found in the cytoplasm. The catalysed reaction is tRNA(Tyr) + L-tyrosine + ATP = L-tyrosyl-tRNA(Tyr) + AMP + diphosphate + H(+). Its function is as follows. Catalyzes the attachment of tyrosine to tRNA(Tyr) in a two-step reaction: tyrosine is first activated by ATP to form Tyr-AMP and then transferred to the acceptor end of tRNA(Tyr). This chain is Tyrosine--tRNA ligase 1, found in Bacillus anthracis.